Here is a 92-residue protein sequence, read N- to C-terminus: Small ribosomal subunit protein uS19 (92 aa).

The protein belongs to the universal ribosomal protein uS19 family.

Its function is as follows. Protein S19 forms a complex with S13 that binds strongly to the 16S ribosomal RNA. This is Small ribosomal subunit protein uS19 from Bartonella quintana (strain Toulouse) (Rochalimaea quintana).